A 538-amino-acid chain; its full sequence is Putative cysteine ligase BshC (538 aa).

Residues K460–L484 are a coiled coil.

The protein belongs to the BshC family.

Functionally, involved in bacillithiol (BSH) biosynthesis. May catalyze the last step of the pathway, the addition of cysteine to glucosamine malate (GlcN-Mal) to generate BSH. The protein is Putative cysteine ligase BshC of Bacillus thuringiensis subsp. konkukian (strain 97-27).